The primary structure comprises 338 residues: N-acetyl-gamma-glutamyl-phosphate reductase (338 aa).

C148 is a catalytic residue.

It belongs to the NAGSA dehydrogenase family. Type 1 subfamily.

It is found in the cytoplasm. It catalyses the reaction N-acetyl-L-glutamate 5-semialdehyde + phosphate + NADP(+) = N-acetyl-L-glutamyl 5-phosphate + NADPH + H(+). It participates in amino-acid biosynthesis; L-arginine biosynthesis; N(2)-acetyl-L-ornithine from L-glutamate: step 3/4. Its function is as follows. Catalyzes the NADPH-dependent reduction of N-acetyl-5-glutamyl phosphate to yield N-acetyl-L-glutamate 5-semialdehyde. In Leptospira borgpetersenii serovar Hardjo-bovis (strain JB197), this protein is N-acetyl-gamma-glutamyl-phosphate reductase.